We begin with the raw amino-acid sequence, 1894 residues long: 1,3-beta-glucan synthase component bgs2 (1894 aa).

2 disordered regions span residues 1-53 and 282-310; these read MSWH…DSNK and GPKI…PETS. The span at 32-51 shows a compositional bias: polar residues; the sequence is EFNNPGEESTYPQANSWNDS. A compositionally biased stretch (basic residues) spans 286 to 296; it reads KQAKKKQKRKS. A run of 16 helical transmembrane segments spans residues 530–550, 566–586, 600–620, 655–675, 710–730, 731–751, 1338–1358, 1394–1414, 1476–1498, 1503–1525, 1598–1618, 1637–1657, 1673–1693, 1697–1717, 1778–1798, and 1837–1857; these read VSLG…FEWI, FLIL…VFGF, VAIV…LVPL, VSWG…YFFL, ILLG…TYLW, YILV…ISIW, IFIM…GGMY, CIIS…VQEL, LLFS…MLLF, VWIP…PFIF, FTEI…YFFI, ILIL…TFAG, FGAV…IIVF, WYLE…IIAI, DFFL…IPFI, and TMFF…LVVA.

The protein belongs to the glycosyltransferase 48 family. In terms of assembly, component of the 1,3-beta-glucan synthase (GS) complex, composed of at least the alternate catalytic subunits bgs1, bgs2, bgs3, and bgs4, and a regulatory subunit chr4.

It localises to the prospore membrane. The enzyme catalyses [(1-&gt;3)-beta-D-glucosyl](n) + UDP-alpha-D-glucose = [(1-&gt;3)-beta-D-glucosyl](n+1) + UDP + H(+). In terms of biological role, alternate catalytic subunit of the 1,3-beta-glucan synthase (GS) complex. Synthesizes 1,3-beta-glucan, a major structural component of the yeast cell wall. Has a role in ascospore development where it is required for the assembly of a functional spore wall. The sequence is that of 1,3-beta-glucan synthase component bgs2 from Schizosaccharomyces pombe (strain 972 / ATCC 24843) (Fission yeast).